The following is a 682-amino-acid chain: Potassium-transporting ATPase ATP-binding subunit (682 aa).

4 helical membrane-spanning segments follow: residues 34-54 (PVMFIVWIGSLLTTCISIAMA), 62-82 (ALFSAAISGWLWITVLFANFA), 219-239 (IALTILLIALTIVFLLATATL), and 254-274 (VLVALLVCLIPTTIGGLLSAI). The 4-aspartylphosphate intermediate role is filled by aspartate 307. Residues aspartate 344, glutamate 348, 377-384 (FTAQSRMS), and lysine 395 contribute to the ATP site. The Mg(2+) site is built by aspartate 518 and aspartate 522. The next 3 helical transmembrane spans lie at 588–608 (FAIIPAAFAATYPQLNALNIM), 616–636 (AILSAVIFNALIIVFLIPLAL), and 656–676 (IYGLGGLLVPFIGIKVIDLLL).

It belongs to the cation transport ATPase (P-type) (TC 3.A.3) family. Type IA subfamily. As to quaternary structure, the system is composed of three essential subunits: KdpA, KdpB and KdpC.

It localises to the cell inner membrane. It carries out the reaction K(+)(out) + ATP + H2O = K(+)(in) + ADP + phosphate + H(+). Part of the high-affinity ATP-driven potassium transport (or Kdp) system, which catalyzes the hydrolysis of ATP coupled with the electrogenic transport of potassium into the cytoplasm. This subunit is responsible for energy coupling to the transport system and for the release of the potassium ions to the cytoplasm. The protein is Potassium-transporting ATPase ATP-binding subunit of Escherichia coli (strain K12 / MC4100 / BW2952).